The chain runs to 147 residues: Large ribosomal subunit protein uL16 (147 aa).

Belongs to the universal ribosomal protein uL16 family. In terms of assembly, part of the 50S ribosomal subunit.

In terms of biological role, binds 23S rRNA and is also seen to make contacts with the A and possibly P site tRNAs. The polypeptide is Large ribosomal subunit protein uL16 (Lactobacillus delbrueckii subsp. bulgaricus (strain ATCC 11842 / DSM 20081 / BCRC 10696 / JCM 1002 / NBRC 13953 / NCIMB 11778 / NCTC 12712 / WDCM 00102 / Lb 14)).